The following is a 208-amino-acid chain: Na(+)-translocating NADH-quinone reductase subunit D (208 aa).

The next 5 membrane-spanning stretches (helical) occupy residues 42-62 (IVMG…ISLV), 72-92 (IIVQ…LLQA), 103-123 (VFVG…AFAM), 131-151 (LIDG…VATV), and 178-198 (NGLF…IWGL).

It belongs to the NqrDE/RnfAE family. In terms of assembly, composed of six subunits; NqrA, NqrB, NqrC, NqrD, NqrE and NqrF.

It is found in the cell inner membrane. It carries out the reaction a ubiquinone + n Na(+)(in) + NADH + H(+) = a ubiquinol + n Na(+)(out) + NAD(+). NQR complex catalyzes the reduction of ubiquinone-1 to ubiquinol by two successive reactions, coupled with the transport of Na(+) ions from the cytoplasm to the periplasm. NqrA to NqrE are probably involved in the second step, the conversion of ubisemiquinone to ubiquinol. This is Na(+)-translocating NADH-quinone reductase subunit D from Neisseria gonorrhoeae (strain ATCC 700825 / FA 1090).